Consider the following 462-residue polypeptide: uncharacterized protein (462 aa).

In terms of domain architecture, TRAM spans 12-70; sequence MLKKNDIIQVAISDLSHEGAGVAKHDGFVFFVDNALPEEVIDMRVLKVNKNSGFGKVEA. 4 residues coordinate S-adenosyl-L-methionine: Gln294, Tyr323, Glu344, and Asp392. The Nucleophile role is filled by Cys419.

This sequence belongs to the class I-like SAM-binding methyltransferase superfamily. RNA M5U methyltransferase family.

This is an uncharacterized protein from Streptococcus pyogenes serotype M18 (strain MGAS8232).